A 238-amino-acid polypeptide reads, in one-letter code: Uridylate kinase (238 aa).

10–13 (KFSG) lines the ATP pocket. Residues 18–23 (GGNGFG) form an involved in allosteric activation by GTP region. Position 52 (glycine 52) interacts with UMP. Residues glycine 53 and arginine 57 each coordinate ATP. Residues aspartate 73 and 134–141 (TGNPFFTT) each bind UMP. Residues threonine 161, tyrosine 167, and aspartate 170 each contribute to the ATP site.

This sequence belongs to the UMP kinase family. As to quaternary structure, homohexamer.

The protein resides in the cytoplasm. The catalysed reaction is UMP + ATP = UDP + ADP. It participates in pyrimidine metabolism; CTP biosynthesis via de novo pathway; UDP from UMP (UMPK route): step 1/1. With respect to regulation, allosterically activated by GTP. Inhibited by UTP. Functionally, catalyzes the reversible phosphorylation of UMP to UDP. The polypeptide is Uridylate kinase (Campylobacter fetus subsp. fetus (strain 82-40)).